A 279-amino-acid chain; its full sequence is MHPDDQLKSALRNGFDPKLLYKEPLKTVKEPICTILEKYSKIPLEKVVSHINEVRDRAFAVFPYACIGQFSFVELSIADSPCYAEMLDRTKHGQKLLDLGCAFGQELRQLIFDGAPPTNLYGSDIQQDFLNLGYELFLDRAILPESQLIAADVLDKQSALFSRLSGKINVVYISLFLHVFQYKKQVTVVQNILDLLPAEPGALIVCRVTACRDQGVLNATRERMPYYYHDLASWKRLWEEVESQTGLRLSVETWEQPDELVKNHPLPGIYILGSAIRRL.

S-adenosyl-L-methionine is bound by residues 124 to 125 (DI) and 152 to 153 (DV).

It belongs to the class I-like SAM-binding methyltransferase superfamily. Homodimer.

The protein operates within secondary metabolite biosynthesis; terpenoid biosynthesis. Functionally, methyltransferase; part of the gene cluster that mediates the biosynthesis of terretonin, a fungal meroterpenoid that acts as a mycotoxin. The first step of the pathway is the synthesis of 3,5-dimethylorsellinic acid (DMOA) by the polyketide synthase trt4. DMOA is then prenylated into farnesyl-DMOA by the polyprenyl transferase trt2. Methylation by the methyltransferase trt5 then leads to farnesyl-DMOA methyl ester which is further subject to epoxidation by the FAD-dependent monooxygenase trt8 to yield epoxyfarnesyl-DMOA methyl ester. Cyclization of epoxyfarnesyl-DMOA methyl ester by the terpene cyclase trt1 leads to a tetracycle intermediate which is in turn converted to preterretonin. Dehydrogenase trt9 comes next to transform preterretonin to preterrenoid. The FAD-dependent monooxygenase trt3 is then required for the C-hydroxylation at C16 of preterrenoid to yield terrenoid. The cytochrome P450 trt6 catalyzes three successive oxidations to transform terrenoid into an unstable intermediate, which then undergoes the D-ring expansion and unusual rearrangement of the methoxy group to afford the core skeleton of terretonin. Trt14 catalyzes the D-ring expansion of terretonin involving intramolecular methoxy rearrangement as well as the hydrolysis of the expanded D-ring and the methyl ester moiety. Finally, the nonheme iron-dependent dioxygenase trt7 accomplishes the last two oxidation reactions steps to complete the biosynthesis of terretonin. Terretonin C is produced via spontaneous decarboxylation of the terretonin precursor. Another shunt product of the terretonin biosynthesis is dihydrofarnesyl-DMOA, derived from epoxyfarnesyl-DMOA through hydrolysis of the epoxide. This is Methyltransferase trt5 from Aspergillus terreus (strain NIH 2624 / FGSC A1156).